The chain runs to 388 residues: Beta-lactamase (388 aa).

The signal sequence occupies residues 1–24 (MMKKSIINTLIFTSIATFPLYTLA). The Acyl-ester intermediate role is filled by S89. Y175 serves as the catalytic Proton acceptor. 342-344 (KTG) is a substrate binding site.

This sequence belongs to the class-C beta-lactamase family.

It localises to the periplasm. The catalysed reaction is a beta-lactam + H2O = a substituted beta-amino acid. This protein is a serine beta-lactamase with a substrate specificity for cephalosporins. This is Beta-lactamase (ampC) from Yersinia enterocolitica.